Consider the following 248-residue polypeptide: Tryptophan synthase alpha chain (248 aa).

Catalysis depends on proton acceptor residues Glu-36 and Asp-47.

Belongs to the TrpA family. In terms of assembly, tetramer of two alpha and two beta chains.

The enzyme catalyses (1S,2R)-1-C-(indol-3-yl)glycerol 3-phosphate + L-serine = D-glyceraldehyde 3-phosphate + L-tryptophan + H2O. Its pathway is amino-acid biosynthesis; L-tryptophan biosynthesis; L-tryptophan from chorismate: step 5/5. Functionally, the alpha subunit is responsible for the aldol cleavage of indoleglycerol phosphate to indole and glyceraldehyde 3-phosphate. The polypeptide is Tryptophan synthase alpha chain (Pyrococcus furiosus (strain ATCC 43587 / DSM 3638 / JCM 8422 / Vc1)).